The following is a 97-amino-acid chain: Co-chaperonin GroES (97 aa).

Belongs to the GroES chaperonin family. In terms of assembly, heptamer of 7 subunits arranged in a ring. Interacts with the chaperonin GroEL.

It localises to the cytoplasm. Together with the chaperonin GroEL, plays an essential role in assisting protein folding. The GroEL-GroES system forms a nano-cage that allows encapsulation of the non-native substrate proteins and provides a physical environment optimized to promote and accelerate protein folding. GroES binds to the apical surface of the GroEL ring, thereby capping the opening of the GroEL channel. The polypeptide is Co-chaperonin GroES (Elusimicrobium minutum (strain Pei191)).